The chain runs to 300 residues: Probable lipid kinase YegS-like (300 aa).

The region spanning 1 to 129 (MSKKALLILH…CDVIRVNNHY (129 aa)) is the DAGKc domain. ATP-binding positions include Thr38, 64–70 (GDGSVRD), and Thr92. The Mg(2+) site is built by Leu210, Asp213, and Leu215. Catalysis depends on Glu272, which acts as the Proton acceptor.

This sequence belongs to the diacylglycerol/lipid kinase family. YegS lipid kinase subfamily. Requires Mg(2+) as cofactor. Ca(2+) serves as cofactor.

It is found in the cytoplasm. Its function is as follows. Probably phosphorylates lipids; the in vivo substrate is unknown. In Alcanivorax borkumensis (strain ATCC 700651 / DSM 11573 / NCIMB 13689 / SK2), this protein is Probable lipid kinase YegS-like.